Consider the following 497-residue polypeptide: Putative aldehyde dehydrogenase AldA (497 aa).

213–219 (GKGSESG) lines the NAD(+) pocket. Catalysis depends on residues Glu-257 and Cys-291.

Belongs to the aldehyde dehydrogenase family.

It catalyses the reaction an aldehyde + NAD(+) + H2O = a carboxylate + NADH + 2 H(+). The sequence is that of Putative aldehyde dehydrogenase AldA (aldA) from Staphylococcus haemolyticus (strain JCSC1435).